The primary structure comprises 180 residues: dCTP deaminase, dUMP-forming (180 aa).

DCTP-binding positions include 100 to 105 (RSSLGR), Asp117, 125 to 127 (TLE), Gln146, Tyr160, and Gln167. Residue Glu127 is the Proton donor/acceptor of the active site.

Belongs to the dCTP deaminase family. Homotrimer.

It catalyses the reaction dCTP + 2 H2O = dUMP + NH4(+) + diphosphate. It participates in pyrimidine metabolism; dUMP biosynthesis; dUMP from dCTP: step 1/1. Bifunctional enzyme that catalyzes both the deamination of dCTP to dUTP and the hydrolysis of dUTP to dUMP without releasing the toxic dUTP intermediate. The sequence is that of dCTP deaminase, dUMP-forming from Persephonella marina (strain DSM 14350 / EX-H1).